The sequence spans 320 residues: Cytochrome f (320 aa).

The N-terminal stretch at 1 to 35 (MQTRNTFSWIKEEITRSISVSLMIYIITGASISNA) is a signal peptide. Residues tyrosine 36, cysteine 56, cysteine 59, and histidine 60 each contribute to the heme site. Residues 286–306 (VQGLLFFLASIVFAQIFLVLK) traverse the membrane as a helical segment.

The protein belongs to the cytochrome f family. As to quaternary structure, the 4 large subunits of the cytochrome b6-f complex are cytochrome b6, subunit IV (17 kDa polypeptide, petD), cytochrome f and the Rieske protein, while the 4 small subunits are PetG, PetL, PetM and PetN. The complex functions as a dimer. Requires heme as cofactor.

The protein resides in the plastid. It is found in the chloroplast thylakoid membrane. In terms of biological role, component of the cytochrome b6-f complex, which mediates electron transfer between photosystem II (PSII) and photosystem I (PSI), cyclic electron flow around PSI, and state transitions. In Gossypium hirsutum (Upland cotton), this protein is Cytochrome f.